The chain runs to 373 residues: UDP-N-acetylglucosamine--N-acetylmuramyl-(pentapeptide) pyrophosphoryl-undecaprenol N-acetylglucosamine transferase (373 aa).

UDP-N-acetyl-alpha-D-glucosamine-binding positions include 16-18 (TGG), asparagine 128, arginine 164, serine 192, isoleucine 250, and glutamine 295.

Belongs to the glycosyltransferase 28 family. MurG subfamily.

The protein resides in the cell inner membrane. It carries out the reaction di-trans,octa-cis-undecaprenyl diphospho-N-acetyl-alpha-D-muramoyl-L-alanyl-D-glutamyl-meso-2,6-diaminopimeloyl-D-alanyl-D-alanine + UDP-N-acetyl-alpha-D-glucosamine = di-trans,octa-cis-undecaprenyl diphospho-[N-acetyl-alpha-D-glucosaminyl-(1-&gt;4)]-N-acetyl-alpha-D-muramoyl-L-alanyl-D-glutamyl-meso-2,6-diaminopimeloyl-D-alanyl-D-alanine + UDP + H(+). It participates in cell wall biogenesis; peptidoglycan biosynthesis. In terms of biological role, cell wall formation. Catalyzes the transfer of a GlcNAc subunit on undecaprenyl-pyrophosphoryl-MurNAc-pentapeptide (lipid intermediate I) to form undecaprenyl-pyrophosphoryl-MurNAc-(pentapeptide)GlcNAc (lipid intermediate II). The chain is UDP-N-acetylglucosamine--N-acetylmuramyl-(pentapeptide) pyrophosphoryl-undecaprenol N-acetylglucosamine transferase from Paraburkholderia phymatum (strain DSM 17167 / CIP 108236 / LMG 21445 / STM815) (Burkholderia phymatum).